Consider the following 122-residue polypeptide: Large ribosomal subunit protein uL14 (122 aa).

This sequence belongs to the universal ribosomal protein uL14 family. In terms of assembly, part of the 50S ribosomal subunit. Forms a cluster with proteins L3 and L19. In the 70S ribosome, L14 and L19 interact and together make contacts with the 16S rRNA in bridges B5 and B8.

Binds to 23S rRNA. Forms part of two intersubunit bridges in the 70S ribosome. This Acinetobacter baylyi (strain ATCC 33305 / BD413 / ADP1) protein is Large ribosomal subunit protein uL14.